We begin with the raw amino-acid sequence, 415 residues long: von Willebrand factor A domain-containing protein 1 (415 aa).

An N-terminal signal peptide occupies residues 1 to 18 (MLFWTAFSMALSLRLALA). The 176-residue stretch at 34–209 (DLLFLLDSSA…IIARELRGSI (176 aa)) folds into the VWFA domain. S74, S80, and S93 each carry phosphoserine. 2 consecutive Fibronectin type-III domains span residues 214–305 (QPQQ…LQEE) and 307–403 (GPER…TRAP). A glycan (N-linked (GlcNAc...) asparagine) is linked at N264. C369 and C393 are oxidised to a cystine. Positions 391 to 415 (KACTASGARTRAPQSMRPEAGPREP) are disordered.

In terms of assembly, homodimer or homomultimer; disulfide-linked. Interacts with HSPG2. In terms of processing, N-glycosylated. As to expression, expressed at high levels in the chondrocytes. Detected in the vasculature of neural tissues, in basement membrane structures of the peripheral nervous system, in the apical ectodermal ridge of developing limb buds, and in skeletal and cardiac muscle (at protein level).

It localises to the secreted. Its subcellular location is the extracellular space. It is found in the extracellular matrix. The protein resides in the basement membrane. In terms of biological role, promotes matrix assembly. Involved in the organization of skeletal muscles and in the formation of neuromuscular junctions. In Mus musculus (Mouse), this protein is von Willebrand factor A domain-containing protein 1 (Vwa1).